The primary structure comprises 225 residues: N-(5'-phosphoribosyl)anthranilate isomerase (225 aa).

Belongs to the TrpF family.

It catalyses the reaction N-(5-phospho-beta-D-ribosyl)anthranilate = 1-(2-carboxyphenylamino)-1-deoxy-D-ribulose 5-phosphate. The protein operates within amino-acid biosynthesis; L-tryptophan biosynthesis; L-tryptophan from chorismate: step 3/5. This Nitrobacter hamburgensis (strain DSM 10229 / NCIMB 13809 / X14) protein is N-(5'-phosphoribosyl)anthranilate isomerase.